Consider the following 80-residue polypeptide: MTESIPKKPLKKGSLVFIDKSIYDGSVEALASDQDLPSYIFEGPGEILSIKEEYAQVRWRRPVPDVWFKLDQIKEYIVSE.

Belongs to the complex I NdhO subunit family. In terms of assembly, NDH-1 can be composed of about 15 different subunits; different subcomplexes with different compositions have been identified which probably have different functions.

It is found in the cellular thylakoid membrane. It catalyses the reaction a plastoquinone + NADH + (n+1) H(+)(in) = a plastoquinol + NAD(+) + n H(+)(out). It carries out the reaction a plastoquinone + NADPH + (n+1) H(+)(in) = a plastoquinol + NADP(+) + n H(+)(out). Functionally, NDH-1 shuttles electrons from an unknown electron donor, via FMN and iron-sulfur (Fe-S) centers, to quinones in the respiratory and/or the photosynthetic chain. The immediate electron acceptor for the enzyme in this species is believed to be plastoquinone. Couples the redox reaction to proton translocation, and thus conserves the redox energy in a proton gradient. Cyanobacterial NDH-1 also plays a role in inorganic carbon-concentration. This Prochlorococcus marinus subsp. pastoris (strain CCMP1986 / NIES-2087 / MED4) protein is NAD(P)H-quinone oxidoreductase subunit O.